Reading from the N-terminus, the 204-residue chain is NADH-quinone oxidoreductase subunit C (204 aa).

This sequence belongs to the complex I 30 kDa subunit family. NDH-1 is composed of 14 different subunits. Subunits NuoB, C, D, E, F, and G constitute the peripheral sector of the complex.

The protein resides in the cell inner membrane. It catalyses the reaction a quinone + NADH + 5 H(+)(in) = a quinol + NAD(+) + 4 H(+)(out). Functionally, NDH-1 shuttles electrons from NADH, via FMN and iron-sulfur (Fe-S) centers, to quinones in the respiratory chain. The immediate electron acceptor for the enzyme in this species is believed to be ubiquinone. Couples the redox reaction to proton translocation (for every two electrons transferred, four hydrogen ions are translocated across the cytoplasmic membrane), and thus conserves the redox energy in a proton gradient. The chain is NADH-quinone oxidoreductase subunit C from Polaromonas naphthalenivorans (strain CJ2).